We begin with the raw amino-acid sequence, 232 residues long: Dof zinc finger protein DOF4.3 (232 aa).

The Dof-type zinc-finger motif lies at 25 to 79 (RVCARCDSDNTKFCYYNNYSEFQPRYFCKNCRRYWTHGGALRNVPIGGSSRAKRT). 4 residues coordinate Zn(2+): Cys27, Cys30, Cys52, and Cys55.

The protein localises to the nucleus. In terms of biological role, transcription factor that binds specifically to a 5'-AA[AG]G-3' consensus core sequence. This Arabidopsis thaliana (Mouse-ear cress) protein is Dof zinc finger protein DOF4.3 (DOF4.3).